The sequence spans 154 residues: Small ribosomal subunit protein bS6 (154 aa).

The disordered stretch occupies residues 107 to 154 (KSDDRERGFRGPKPPGRFESGRKRGYDDREEFRARAGGDDDDRGLDQE). Residues 125–154 (ESGRKRGYDDREEFRARAGGDDDDRGLDQE) are compositionally biased toward basic and acidic residues.

It belongs to the bacterial ribosomal protein bS6 family.

Functionally, binds together with bS18 to 16S ribosomal RNA. In Granulibacter bethesdensis (strain ATCC BAA-1260 / CGDNIH1), this protein is Small ribosomal subunit protein bS6.